Consider the following 304-residue polypeptide: ADP-ribosyl cyclase/cyclic ADP-ribose hydrolase 1 (304 aa).

Residues 1 to 21 are Cytoplasmic-facing; it reads MANYEFSQVSGDRPGCRLSRK. A helical; Signal-anchor for type II membrane protein membrane pass occupies residues 22-44; it reads AQIGLGVGLLVLIALVVGIVVIL. The Extracellular segment spans residues 45 to 304; that stretch reads LRPRSLLVWT…PEHPSCRLNT (260 aa). Cystine bridges form between C70/C86, C103/C184, and C164/C177. N104 carries an N-linked (GlcNAc...) asparagine glycan. Residue C123 is part of the active site. N-linked (GlcNAc...) asparagine glycosylation is present at N124. Residue C205 is part of the active site. N-linked (GlcNAc...) asparagine glycans are attached at residues N213 and N223. 2 cysteine pairs are disulfide-bonded: C258–C279 and C291–C300.

This sequence belongs to the ADP-ribosyl cyclase family. Homodimer.

The protein localises to the membrane. It carries out the reaction NAD(+) = cyclic ADP-beta-D-ribose + nicotinamide + H(+). The catalysed reaction is nicotinate + NADP(+) = nicotinate-adenine dinucleotide phosphate + nicotinamide. The enzyme catalyses NAD(+) + H2O = ADP-D-ribose + nicotinamide + H(+). Synthesizes the second messengers cyclic ADP-ribose (cADPR) and nicotinate-adenine dinucleotide phosphate (NAADP), the former a second messenger for glucose-induced insulin secretion, the latter a Ca(2+) mobilizer. Also has cADPR hydrolase activity. The protein is ADP-ribosyl cyclase/cyclic ADP-ribose hydrolase 1 (Cd38) of Mus musculus (Mouse).